Here is a 184-residue protein sequence, read N- to C-terminus: MALPFSLLMALVVLSCHSSCSLGCDLPHTHSLGNTRVLMLLGQMRRISPFSCLKDRNDFGFPQEVFDGNQFRKPQAISAVHETIQQIFHLFSTDGSSAAWDESLLDKLYTGLYQQLTELEACLSQEVGVEETPLMNEDSLLAVRRYFQRIALYLQEKKYSPCAWEIVRAEIMRCFSSSTNLQQS.

An N-terminal signal peptide occupies residues 1–23; the sequence is MALPFSLLMALVVLSCHSSCSLG. Cystine bridges form between cysteine 24-cysteine 122 and cysteine 52-cysteine 162.

This sequence belongs to the alpha/beta interferon family. As to quaternary structure, interacts with IFNAR2.

It localises to the secreted. In terms of biological role, produced by macrophages, IFN-alpha have antiviral activities. This is Interferon alpha-2 from Equus caballus (Horse).